The chain runs to 186 residues: Tumor necrosis factor alpha-induced protein 8-like protein 1 (186 aa).

The protein belongs to the TNFAIP8 family. Interacts with FBXW5; TNFAIP8L1 competes with TSC2 to bind FBXW5 increasing TSC2 stability by preventing its ubiquitination. Detected in wide variety tissues, such as neurons in brain, hepatocytes, germ cells of female and male reproductive organs, muscular tissues and variety types of cells of the epithelial origin (at protein level).

The protein localises to the cytoplasm. In terms of biological role, acts as a negative regulator of mTOR activity. The sequence is that of Tumor necrosis factor alpha-induced protein 8-like protein 1 (Tnfaip8l1) from Mus musculus (Mouse).